The chain runs to 382 residues: Lipid-A-disaccharide synthase (382 aa).

Belongs to the LpxB family.

It carries out the reaction a lipid X + a UDP-2-N,3-O-bis[(3R)-3-hydroxyacyl]-alpha-D-glucosamine = a lipid A disaccharide + UDP + H(+). Its pathway is bacterial outer membrane biogenesis; LPS lipid A biosynthesis. Its function is as follows. Condensation of UDP-2,3-diacylglucosamine and 2,3-diacylglucosamine-1-phosphate to form lipid A disaccharide, a precursor of lipid A, a phosphorylated glycolipid that anchors the lipopolysaccharide to the outer membrane of the cell. This Alteromonas mediterranea (strain DSM 17117 / CIP 110805 / LMG 28347 / Deep ecotype) protein is Lipid-A-disaccharide synthase.